An 81-amino-acid polypeptide reads, in one-letter code: Exodeoxyribonuclease 7 small subunit (81 aa).

Positions 59-81 are disordered; the sequence is KLVDKDGNEKTLDPQNASAPEEE. The segment covering 60 to 70 has biased composition (basic and acidic residues); the sequence is LVDKDGNEKTL. The span at 71–81 shows a compositional bias: polar residues; that stretch reads DPQNASAPEEE.

The protein belongs to the XseB family. As to quaternary structure, heterooligomer composed of large and small subunits.

It is found in the cytoplasm. It catalyses the reaction Exonucleolytic cleavage in either 5'- to 3'- or 3'- to 5'-direction to yield nucleoside 5'-phosphates.. Bidirectionally degrades single-stranded DNA into large acid-insoluble oligonucleotides, which are then degraded further into small acid-soluble oligonucleotides. This Lactobacillus gasseri (strain ATCC 33323 / DSM 20243 / BCRC 14619 / CIP 102991 / JCM 1131 / KCTC 3163 / NCIMB 11718 / NCTC 13722 / AM63) protein is Exodeoxyribonuclease 7 small subunit.